Here is a 203-residue protein sequence, read N- to C-terminus: MFKNLIFLFFIGLATAIRFNLTDLECSRLRGPHCGTYLLKVVGTNATYVGEKSFIGLDALTESKGEFFQRMLEQEPRLIPRLFTIAENDTANFTPLTFTTYLKTCNPQSIENAMIPFVNTVTSEISFDAWAYTAQNSSRITGLSNQLMNSTLYNVQVATCTPGFSALLLDSPTINVFNNEEGMPSWCQPIELTPVCPLDEGFN.

The first 16 residues, Met-1–Ala-16, serve as a signal peptide directing secretion.

This sequence belongs to the VEL1 family.

The protein localises to the cytoplasm. The protein resides in the cytosol. The protein is VEL1-related protein SPBPB2B2.15 of Schizosaccharomyces pombe (strain 972 / ATCC 24843) (Fission yeast).